A 101-amino-acid chain; its full sequence is Early E3A 11.6 kDa glycoprotein (101 aa).

N14 carries an N-linked (GlcNAc...) asparagine; by host glycan. The helical transmembrane segment at 41–62 threads the bilayer; that stretch reads MWWFSIALMFVCLIIMWLICCL.

This sequence belongs to the adenoviridae E3A-1 family. N-glycosylated and probably also O-glycosylated.

It is found in the host nucleus membrane. The sequence is that of Early E3A 11.6 kDa glycoprotein from Human adenovirus C serotype 6 (HAdV-6).